Consider the following 628-residue polypeptide: Chaperone protein HtpG (628 aa).

Positions 1 to 340 (MKGQETRGFQ…SNDLPLNVSR (340 aa)) are a; substrate-binding. Residues 341–556 (EILQDSRVTQ…ADDMTTQMAK (216 aa)) are b. A c region spans residues 557 to 628 (LFAAAGQAAP…IRRMNQLLNA (72 aa)).

The protein belongs to the heat shock protein 90 family. Homodimer.

It localises to the cytoplasm. Functionally, molecular chaperone. Has ATPase activity. This is Chaperone protein HtpG from Sodalis glossinidius (strain morsitans).